The following is a 129-amino-acid chain: UPF0344 protein SSP1805 (129 aa).

The next 4 membrane-spanning stretches (helical) occupy residues 1–21 (MLHM…AAYF), 36–56 (IHML…WVWI), 68–88 (MLLT…EVTI), and 100–120 (LMWT…ILPM).

It belongs to the UPF0344 family.

The protein resides in the cell membrane. In Staphylococcus saprophyticus subsp. saprophyticus (strain ATCC 15305 / DSM 20229 / NCIMB 8711 / NCTC 7292 / S-41), this protein is UPF0344 protein SSP1805.